Reading from the N-terminus, the 72-residue chain is Mitotic-spindle organizing protein 1 (72 aa).

Belongs to the MOZART1 family. As to quaternary structure, part of the gamma-tubulin complex.

Its subcellular location is the cytoplasm. The protein localises to the cytoskeleton. The protein resides in the microtubule organizing center. It is found in the centrosome. It localises to the spindle. Required for gamma-tubulin complex recruitment to the centrosome. The sequence is that of Mitotic-spindle organizing protein 1 (mzt1) from Xenopus tropicalis (Western clawed frog).